The sequence spans 399 residues: Elongation factor Tu (399 aa).

The region spanning 10-209 (KPHVNIGTIG…AVDSYIPTPK (200 aa)) is the tr-type G domain. The G1 stretch occupies residues 19–26 (GHVDHGKT). 19 to 26 (GHVDHGKT) contributes to the GTP binding site. Thr-26 is a Mg(2+) binding site. A G2 region spans residues 60–64 (GITIA). The interval 81–84 (DCPG) is G3. GTP contacts are provided by residues 81 to 85 (DCPGH) and 136 to 139 (NKTD). The interval 136–139 (NKTD) is G4. Residues 174–176 (SAL) form a G5 region.

Belongs to the TRAFAC class translation factor GTPase superfamily. Classic translation factor GTPase family. EF-Tu/EF-1A subfamily. Monomer.

It is found in the cytoplasm. It carries out the reaction GTP + H2O = GDP + phosphate + H(+). Its function is as follows. GTP hydrolase that promotes the GTP-dependent binding of aminoacyl-tRNA to the A-site of ribosomes during protein biosynthesis. This Campylobacter hominis (strain ATCC BAA-381 / DSM 21671 / CCUG 45161 / LMG 19568 / NCTC 13146 / CH001A) protein is Elongation factor Tu.